The following is a 172-amino-acid chain: Large ribosomal subunit protein uL5 (172 aa).

Belongs to the universal ribosomal protein uL5 family. In terms of assembly, component of the large ribosomal subunit.

It localises to the nucleus. It is found in the cytoplasm. Its function is as follows. Component of the ribosome, a large ribonucleoprotein complex responsible for the synthesis of proteins in the cell. The small ribosomal subunit (SSU) binds messenger RNAs (mRNAs) and translates the encoded message by selecting cognate aminoacyl-transfer RNA (tRNA) molecules. The large subunit (LSU) contains the ribosomal catalytic site termed the peptidyl transferase center (PTC), which catalyzes the formation of peptide bonds, thereby polymerizing the amino acids delivered by tRNAs into a polypeptide chain. The nascent polypeptides leave the ribosome through a tunnel in the LSU and interact with protein factors that function in enzymatic processing, targeting, and the membrane insertion of nascent chains at the exit of the ribosomal tunnel. The sequence is that of Large ribosomal subunit protein uL5 (RPL11) from Tetrahymena thermophila.